Reading from the N-terminus, the 689-residue chain is Glycine--tRNA ligase beta subunit (689 aa).

It belongs to the class-II aminoacyl-tRNA synthetase family. As to quaternary structure, tetramer of two alpha and two beta subunits.

The protein resides in the cytoplasm. It carries out the reaction tRNA(Gly) + glycine + ATP = glycyl-tRNA(Gly) + AMP + diphosphate. The chain is Glycine--tRNA ligase beta subunit from Salmonella arizonae (strain ATCC BAA-731 / CDC346-86 / RSK2980).